The primary structure comprises 227 residues: Cytochrome c oxidase subunit 2 (227 aa).

The Mitochondrial intermembrane segment spans residues 1–14 (MAYPFQLGLQDATS). A helical transmembrane segment spans residues 15–45 (PIMEELMNFHDHTLMIVFLISTLVLYIISLM). Residues 46–59 (LTTKLTHTSTMDAQ) are Mitochondrial matrix-facing. Residues 60-87 (EVETIWTILPAVILILIALPSLRILYMM) form a helical membrane-spanning segment. At 88-227 (DEINNPALTV…YFENWSASMI (140 aa)) the chain is on the mitochondrial intermembrane side. Residues His161, Cys196, Glu198, Cys200, His204, and Met207 each coordinate Cu cation. A Mg(2+)-binding site is contributed by Glu198. Residue Tyr218 is modified to Phosphotyrosine.

It belongs to the cytochrome c oxidase subunit 2 family. As to quaternary structure, component of the cytochrome c oxidase (complex IV, CIV), a multisubunit enzyme composed of 14 subunits. The complex is composed of a catalytic core of 3 subunits MT-CO1, MT-CO2 and MT-CO3, encoded in the mitochondrial DNA, and 11 supernumerary subunits COX4I, COX5A, COX5B, COX6A, COX6B, COX6C, COX7A, COX7B, COX7C, COX8 and NDUFA4, which are encoded in the nuclear genome. The complex exists as a monomer or a dimer and forms supercomplexes (SCs) in the inner mitochondrial membrane with NADH-ubiquinone oxidoreductase (complex I, CI) and ubiquinol-cytochrome c oxidoreductase (cytochrome b-c1 complex, complex III, CIII), resulting in different assemblies (supercomplex SCI(1)III(2)IV(1) and megacomplex MCI(2)III(2)IV(2)). Found in a complex with TMEM177, COA6, COX18, COX20, SCO1 and SCO2. Interacts with TMEM177 in a COX20-dependent manner. Interacts with COX20. Interacts with COX16. It depends on Cu cation as a cofactor.

Its subcellular location is the mitochondrion inner membrane. The enzyme catalyses 4 Fe(II)-[cytochrome c] + O2 + 8 H(+)(in) = 4 Fe(III)-[cytochrome c] + 2 H2O + 4 H(+)(out). Its function is as follows. Component of the cytochrome c oxidase, the last enzyme in the mitochondrial electron transport chain which drives oxidative phosphorylation. The respiratory chain contains 3 multisubunit complexes succinate dehydrogenase (complex II, CII), ubiquinol-cytochrome c oxidoreductase (cytochrome b-c1 complex, complex III, CIII) and cytochrome c oxidase (complex IV, CIV), that cooperate to transfer electrons derived from NADH and succinate to molecular oxygen, creating an electrochemical gradient over the inner membrane that drives transmembrane transport and the ATP synthase. Cytochrome c oxidase is the component of the respiratory chain that catalyzes the reduction of oxygen to water. Electrons originating from reduced cytochrome c in the intermembrane space (IMS) are transferred via the dinuclear copper A center (CU(A)) of subunit 2 and heme A of subunit 1 to the active site in subunit 1, a binuclear center (BNC) formed by heme A3 and copper B (CU(B)). The BNC reduces molecular oxygen to 2 water molecules using 4 electrons from cytochrome c in the IMS and 4 protons from the mitochondrial matrix. In Maxomys surifer (Indomalayan maxomys), this protein is Cytochrome c oxidase subunit 2 (MT-CO2).